Consider the following 252-residue polypeptide: Probable transcriptional regulatory protein RT0442 (252 aa).

Residues 1-22 (MSGHSKFKNIQHRKGAQDKKKS) are disordered.

It belongs to the TACO1 family.

Its subcellular location is the cytoplasm. The chain is Probable transcriptional regulatory protein RT0442 from Rickettsia typhi (strain ATCC VR-144 / Wilmington).